Consider the following 351-residue polypeptide: Fruit bromelain (351 aa).

Residues 1–24 (MASKVQLVFLFLFLCAMWASPSAA) form the signal peptide. Residues 25–121 (SRDEPNDPMM…VVSFDDVNIS (97 aa)) constitute a propeptide, activation peptide. Residue asparagine 119 is glycosylated (N-linked (GlcNAc...) asparagine). 3 disulfides stabilise this stretch: cysteine 144/cysteine 184, cysteine 178/cysteine 217, and cysteine 273/cysteine 325. Cysteine 147 is a catalytic residue. Residues histidine 279 and asparagine 300 contribute to the active site.

It belongs to the peptidase C1 family.

It catalyses the reaction Hydrolysis of proteins with broad specificity for peptide bonds. Bz-Phe-Val-Arg-|-NHMec is a good synthetic substrate, but there is no action on Z-Arg-Arg-|-NHMec (cf. stem bromelain).. Functionally, cysteine proteinase with a high level of diversity in substrate specificity. This Ananas comosus (Pineapple) protein is Fruit bromelain.